The chain runs to 261 residues: ATP synthase subunit a (261 aa).

Helical transmembrane passes span 28–48 (AVHL…LTIF), 89–109 (IAPL…MDWV), 140–160 (NITF…SIKV), 203–223 (LFGN…IGVF), and 229–249 (FLWA…FMML).

Belongs to the ATPase A chain family. In terms of assembly, F-type ATPases have 2 components, CF(1) - the catalytic core - and CF(0) - the membrane proton channel. CF(1) has five subunits: alpha(3), beta(3), gamma(1), delta(1), epsilon(1). CF(0) has three main subunits: a(1), b(2) and c(9-12). The alpha and beta chains form an alternating ring which encloses part of the gamma chain. CF(1) is attached to CF(0) by a central stalk formed by the gamma and epsilon chains, while a peripheral stalk is formed by the delta and b chains.

The protein resides in the cell inner membrane. In terms of biological role, key component of the proton channel; it plays a direct role in the translocation of protons across the membrane. The sequence is that of ATP synthase subunit a from Colwellia psychrerythraea (strain 34H / ATCC BAA-681) (Vibrio psychroerythus).